Reading from the N-terminus, the 400-residue chain is Beta-ketoadipyl-CoA thiolase (400 aa).

Residue Cys-90 is the Acyl-thioester intermediate of the active site. Residues His-356 and Cys-386 each act as proton acceptor in the active site.

It belongs to the thiolase-like superfamily. Thiolase family.

It catalyses the reaction succinyl-CoA + acetyl-CoA = 3-oxoadipyl-CoA + CoA. Its pathway is aromatic compound metabolism; beta-ketoadipate pathway; acetyl-CoA and succinyl-CoA from 3-oxoadipate: step 2/2. Functionally, catalyzes thiolytic cleavage of beta-ketoadipyl-CoA to succinyl-CoA and acetyl-CoA. The chain is Beta-ketoadipyl-CoA thiolase (pcaF) from Pseudomonas putida (Arthrobacter siderocapsulatus).